Here is a 614-residue protein sequence, read N- to C-terminus: Dihydroxy-acid dehydratase (614 aa).

Position 81 (aspartate 81) interacts with Mg(2+). Cysteine 122 is a [2Fe-2S] cluster binding site. Mg(2+) is bound by residues aspartate 123 and lysine 124. N6-carboxylysine is present on lysine 124. Cysteine 193 provides a ligand contact to [2Fe-2S] cluster. Position 489 (glutamate 489) interacts with Mg(2+). The Proton acceptor role is filled by serine 515.

This sequence belongs to the IlvD/Edd family. As to quaternary structure, homodimer. [2Fe-2S] cluster serves as cofactor. Requires Mg(2+) as cofactor.

It catalyses the reaction (2R)-2,3-dihydroxy-3-methylbutanoate = 3-methyl-2-oxobutanoate + H2O. It carries out the reaction (2R,3R)-2,3-dihydroxy-3-methylpentanoate = (S)-3-methyl-2-oxopentanoate + H2O. Its pathway is amino-acid biosynthesis; L-isoleucine biosynthesis; L-isoleucine from 2-oxobutanoate: step 3/4. It functions in the pathway amino-acid biosynthesis; L-valine biosynthesis; L-valine from pyruvate: step 3/4. Functions in the biosynthesis of branched-chain amino acids. Catalyzes the dehydration of (2R,3R)-2,3-dihydroxy-3-methylpentanoate (2,3-dihydroxy-3-methylvalerate) into 2-oxo-3-methylpentanoate (2-oxo-3-methylvalerate) and of (2R)-2,3-dihydroxy-3-methylbutanoate (2,3-dihydroxyisovalerate) into 2-oxo-3-methylbutanoate (2-oxoisovalerate), the penultimate precursor to L-isoleucine and L-valine, respectively. This Saccharophagus degradans (strain 2-40 / ATCC 43961 / DSM 17024) protein is Dihydroxy-acid dehydratase.